The following is a 379-amino-acid chain: UDP-4-amino-4-deoxy-L-arabinose--oxoglutarate aminotransferase (379 aa).

At Lys182 the chain carries N6-(pyridoxal phosphate)lysine.

Belongs to the DegT/DnrJ/EryC1 family. ArnB subfamily. In terms of assembly, homodimer. It depends on pyridoxal 5'-phosphate as a cofactor.

It catalyses the reaction UDP-4-amino-4-deoxy-beta-L-arabinose + 2-oxoglutarate = UDP-beta-L-threo-pentopyranos-4-ulose + L-glutamate. It participates in nucleotide-sugar biosynthesis; UDP-4-deoxy-4-formamido-beta-L-arabinose biosynthesis; UDP-4-deoxy-4-formamido-beta-L-arabinose from UDP-alpha-D-glucuronate: step 2/3. Its pathway is bacterial outer membrane biogenesis; lipopolysaccharide biosynthesis. Its function is as follows. Catalyzes the conversion of UDP-4-keto-arabinose (UDP-Ara4O) to UDP-4-amino-4-deoxy-L-arabinose (UDP-L-Ara4N). The modified arabinose is attached to lipid A and is required for resistance to polymyxin and cationic antimicrobial peptides. The sequence is that of UDP-4-amino-4-deoxy-L-arabinose--oxoglutarate aminotransferase from Salmonella paratyphi A (strain ATCC 9150 / SARB42).